A 478-amino-acid chain; its full sequence is Transposase for insertion sequence element IS231E (478 aa).

Belongs to the transposase 11 family.

Involved in the transposition of the insertion sequence. The chain is Transposase for insertion sequence element IS231E from Bacillus thuringiensis subsp. finitimus.